The chain runs to 172 residues: Small ribosomal subunit protein uS13 (172 aa).

Residues 131-172 (GQRTRTTGRTGVTVGVRRSKAAQAAQQQQKAQASSGGEKKQG) form a disordered region. The segment covering 134 to 163 (TRTTGRTGVTVGVRRSKAAQAAQQQQKAQA) has biased composition (low complexity).

The protein belongs to the universal ribosomal protein uS13 family. In terms of assembly, part of the 30S ribosomal subunit. Forms a loose heterodimer with protein S19. Forms two bridges to the 50S subunit in the 70S ribosome.

Located at the top of the head of the 30S subunit, it contacts several helices of the 16S rRNA. In the 70S ribosome it contacts the 23S rRNA (bridge B1a) and protein L5 of the 50S subunit (bridge B1b), connecting the 2 subunits; these bridges are implicated in subunit movement. This Sulfurisphaera tokodaii (strain DSM 16993 / JCM 10545 / NBRC 100140 / 7) (Sulfolobus tokodaii) protein is Small ribosomal subunit protein uS13.